The sequence spans 581 residues: NADH-quinone oxidoreductase subunit C/D (581 aa).

The segment at 1–172 (MSASELVTEL…PLFNMTASLF (172 aa)) is NADH dehydrogenase I subunit C. The segment at 196–581 (ELMILNYGPH…IDYVMSDVDR (386 aa)) is NADH dehydrogenase I subunit D.

This sequence in the N-terminal section; belongs to the complex I 30 kDa subunit family. In the C-terminal section; belongs to the complex I 49 kDa subunit family. NDH-1 is composed of 13 different subunits. Subunits NuoB, CD, E, F, and G constitute the peripheral sector of the complex.

Its subcellular location is the cell inner membrane. The enzyme catalyses a quinone + NADH + 5 H(+)(in) = a quinol + NAD(+) + 4 H(+)(out). In terms of biological role, NDH-1 shuttles electrons from NADH, via FMN and iron-sulfur (Fe-S) centers, to quinones in the respiratory chain. The immediate electron acceptor for the enzyme in this species is believed to be ubiquinone. Couples the redox reaction to proton translocation (for every two electrons transferred, four hydrogen ions are translocated across the cytoplasmic membrane), and thus conserves the redox energy in a proton gradient. This Rhodopseudomonas palustris (strain TIE-1) protein is NADH-quinone oxidoreductase subunit C/D.